The sequence spans 98 residues: Large ribosomal subunit protein uL23 (98 aa).

Belongs to the universal ribosomal protein uL23 family. As to quaternary structure, part of the 50S ribosomal subunit. Contacts protein L29, and trigger factor when it is bound to the ribosome.

Functionally, one of the early assembly proteins it binds 23S rRNA. One of the proteins that surrounds the polypeptide exit tunnel on the outside of the ribosome. Forms the main docking site for trigger factor binding to the ribosome. This chain is Large ribosomal subunit protein uL23, found in Roseobacter denitrificans (strain ATCC 33942 / OCh 114) (Erythrobacter sp. (strain OCh 114)).